Here is a 281-residue protein sequence, read N- to C-terminus: Cis-2,3-dihydrobiphenyl-2,3-diol dehydrogenase (281 aa).

10–34 (ITGGASGLGRALVDRFVAEGARVAV) serves as a coordination point for NAD(+). Position 142 (serine 142) interacts with substrate. Tyrosine 155 serves as the catalytic Proton acceptor.

This sequence belongs to the short-chain dehydrogenases/reductases (SDR) family. In terms of assembly, homotetramer.

The catalysed reaction is (2R,3S)-3-phenylcyclohexa-3,5-diene-1,2-diol + NAD(+) = biphenyl-2,3-diol + NADH + H(+). It participates in xenobiotic degradation; biphenyl degradation; 2-hydroxy-2,4-pentadienoate and benzoate from biphenyl: step 2/4. This Comamonas testosteroni (Pseudomonas testosteroni) protein is Cis-2,3-dihydrobiphenyl-2,3-diol dehydrogenase (bphB).